A 341-amino-acid polypeptide reads, in one-letter code: Anthranilate phosphoribosyltransferase (341 aa).

5-phospho-alpha-D-ribose 1-diphosphate is bound by residues G84, 87–88 (GD), T92, 94–97 (NIST), 112–120 (KHGNRSVSS), and S124. G84 serves as a coordination point for anthranilate. Mg(2+) is bound at residue S96. N115 serves as a coordination point for anthranilate. R170 contributes to the anthranilate binding site. Mg(2+)-binding residues include D229 and E230.

It belongs to the anthranilate phosphoribosyltransferase family. In terms of assembly, homodimer. Mg(2+) serves as cofactor.

It catalyses the reaction N-(5-phospho-beta-D-ribosyl)anthranilate + diphosphate = 5-phospho-alpha-D-ribose 1-diphosphate + anthranilate. It participates in amino-acid biosynthesis; L-tryptophan biosynthesis; L-tryptophan from chorismate: step 2/5. In terms of biological role, catalyzes the transfer of the phosphoribosyl group of 5-phosphorylribose-1-pyrophosphate (PRPP) to anthranilate to yield N-(5'-phosphoribosyl)-anthranilate (PRA). In Polynucleobacter necessarius subsp. necessarius (strain STIR1), this protein is Anthranilate phosphoribosyltransferase.